The sequence spans 171 residues: MKLNEISDNNGARKGRMRVGRGIGSGKGKTAGRGQKGAKARSGVSINGFEGGQMPLHMRLPKRGFNNIFAKDYAEVNLGMVQRVIDAGKLDISGTVDHAALKAAGLARGGKDGVRLLAKGELTSKVAFKVAGASKGAFAAVEKAGGSIALPEAQPSEQEKKAARREANKAK.

Residues 1–10 (MKLNEISDNN) show a composition bias toward polar residues. Disordered stretches follow at residues 1 to 44 (MKLN…RSGV) and 150 to 171 (LPEA…NKAK). The segment covering 21–35 (RGIGSGKGKTAGRGQ) has biased composition (gly residues). Positions 157–171 (EQEKKAARREANKAK) are enriched in basic and acidic residues.

This sequence belongs to the universal ribosomal protein uL15 family. As to quaternary structure, part of the 50S ribosomal subunit.

In terms of biological role, binds to the 23S rRNA. The protein is Large ribosomal subunit protein uL15 of Novosphingobium aromaticivorans (strain ATCC 700278 / DSM 12444 / CCUG 56034 / CIP 105152 / NBRC 16084 / F199).